Here is a 182-residue protein sequence, read N- to C-terminus: Isopentenyl-diphosphate Delta-isomerase (182 aa).

Mn(2+) is bound by residues H25 and H32. In terms of domain architecture, Nudix hydrolase spans 30-164 (LLHLAFSSWL…PWAFSPWMVM (135 aa)). C67 is an active-site residue. H69 provides a ligand contact to Mn(2+). E87 contributes to the Mg(2+) binding site. E114 and E116 together coordinate Mn(2+). E116 is a catalytic residue.

It belongs to the IPP isomerase type 1 family. In terms of assembly, homodimer. It depends on Mg(2+) as a cofactor. Mn(2+) is required as a cofactor.

It localises to the cytoplasm. It carries out the reaction isopentenyl diphosphate = dimethylallyl diphosphate. Its pathway is isoprenoid biosynthesis; dimethylallyl diphosphate biosynthesis; dimethylallyl diphosphate from isopentenyl diphosphate: step 1/1. Its function is as follows. Catalyzes the 1,3-allylic rearrangement of the homoallylic substrate isopentenyl (IPP) to its highly electrophilic allylic isomer, dimethylallyl diphosphate (DMAPP). The chain is Isopentenyl-diphosphate Delta-isomerase from Escherichia coli O17:K52:H18 (strain UMN026 / ExPEC).